The following is a 115-amino-acid chain: Photosystem II reaction center Psb28 protein (115 aa).

It belongs to the Psb28 family. Part of the photosystem II complex.

The protein resides in the plastid. It is found in the chloroplast thylakoid membrane. The protein is Photosystem II reaction center Psb28 protein of Pyropia yezoensis (Susabi-nori).